The chain runs to 92 residues: uncharacterized protein (92 aa).

This is an uncharacterized protein from Homo sapiens (Human).